Reading from the N-terminus, the 97-residue chain is Acylphosphatase (97 aa).

The region spanning Arg-7–Arg-97 is the Acylphosphatase-like domain. Catalysis depends on residues Arg-22 and Asn-40.

Belongs to the acylphosphatase family.

The catalysed reaction is an acyl phosphate + H2O = a carboxylate + phosphate + H(+). This Mycobacterium avium (strain 104) protein is Acylphosphatase (acyP).